The sequence spans 126 residues: Large ribosomal subunit protein bL12 (126 aa).

It belongs to the bacterial ribosomal protein bL12 family. Homodimer. Part of the ribosomal stalk of the 50S ribosomal subunit. Forms a multimeric L10(L12)X complex, where L10 forms an elongated spine to which 2 to 4 L12 dimers bind in a sequential fashion. Binds GTP-bound translation factors.

In terms of biological role, forms part of the ribosomal stalk which helps the ribosome interact with GTP-bound translation factors. Is thus essential for accurate translation. In Acidovorax ebreus (strain TPSY) (Diaphorobacter sp. (strain TPSY)), this protein is Large ribosomal subunit protein bL12.